Consider the following 526-residue polypeptide: Probable Xaa-Pro aminopeptidase GLRG_02280 (526 aa).

4 residues coordinate Mn(2+): aspartate 285, aspartate 296, glutamate 454, and glutamate 495.

This sequence belongs to the peptidase M24B family. Requires Mn(2+) as cofactor.

It catalyses the reaction Release of any N-terminal amino acid, including proline, that is linked to proline, even from a dipeptide or tripeptide.. Functionally, catalyzes the removal of a penultimate prolyl residue from the N-termini of peptides. The sequence is that of Probable Xaa-Pro aminopeptidase GLRG_02280 from Colletotrichum graminicola (strain M1.001 / M2 / FGSC 10212) (Maize anthracnose fungus).